Consider the following 375-residue polypeptide: Chaperone protein DnaJ (375 aa).

The J domain maps to 4 to 68; sequence DYYEILGVSR…ETRARYDRFG (65 aa). The CR-type zinc finger occupies 135 to 217; sequence GGEKEIRISH…CDGKGANQVT (83 aa). Residues Cys148, Cys151, Cys165, Cys168, Cys191, Cys194, Cys205, and Cys208 each coordinate Zn(2+). CXXCXGXG motif repeat units follow at residues 148–155, 165–172, 191–198, and 205–212; these read CEVCSGSG, CSTCSGSG, CPTCNGTG, and CDACDGKG.

Belongs to the DnaJ family. In terms of assembly, homodimer. Zn(2+) serves as cofactor.

It is found in the cytoplasm. In terms of biological role, participates actively in the response to hyperosmotic and heat shock by preventing the aggregation of stress-denatured proteins and by disaggregating proteins, also in an autonomous, DnaK-independent fashion. Unfolded proteins bind initially to DnaJ; upon interaction with the DnaJ-bound protein, DnaK hydrolyzes its bound ATP, resulting in the formation of a stable complex. GrpE releases ADP from DnaK; ATP binding to DnaK triggers the release of the substrate protein, thus completing the reaction cycle. Several rounds of ATP-dependent interactions between DnaJ, DnaK and GrpE are required for fully efficient folding. Also involved, together with DnaK and GrpE, in the DNA replication of plasmids through activation of initiation proteins. The chain is Chaperone protein DnaJ from Nostoc punctiforme (strain ATCC 29133 / PCC 73102).